The primary structure comprises 184 residues: Protein GrpE (184 aa).

The segment at 1–35 (MTQENQNPPPEQEDVAADPQVNEAAASEPAAVKTP) is disordered.

This sequence belongs to the GrpE family. In terms of assembly, homodimer.

It localises to the cytoplasm. Participates actively in the response to hyperosmotic and heat shock by preventing the aggregation of stress-denatured proteins, in association with DnaK and GrpE. It is the nucleotide exchange factor for DnaK and may function as a thermosensor. Unfolded proteins bind initially to DnaJ; upon interaction with the DnaJ-bound protein, DnaK hydrolyzes its bound ATP, resulting in the formation of a stable complex. GrpE releases ADP from DnaK; ATP binding to DnaK triggers the release of the substrate protein, thus completing the reaction cycle. Several rounds of ATP-dependent interactions between DnaJ, DnaK and GrpE are required for fully efficient folding. The chain is Protein GrpE from Polynucleobacter asymbioticus (strain DSM 18221 / CIP 109841 / QLW-P1DMWA-1) (Polynucleobacter necessarius subsp. asymbioticus).